Consider the following 356-residue polypeptide: DNA polymerase IV (356 aa).

Residues 6-186 (IVHIDMDAFY…LPVDAFHGIG (181 aa)) enclose the UmuC domain. Mg(2+)-binding residues include Asp10 and Asp104. Glu105 is a catalytic residue.

It belongs to the DNA polymerase type-Y family. In terms of assembly, monomer. It depends on Mg(2+) as a cofactor.

It localises to the cytoplasm. It carries out the reaction DNA(n) + a 2'-deoxyribonucleoside 5'-triphosphate = DNA(n+1) + diphosphate. Its function is as follows. Poorly processive, error-prone DNA polymerase involved in untargeted mutagenesis. Copies undamaged DNA at stalled replication forks, which arise in vivo from mismatched or misaligned primer ends. These misaligned primers can be extended by PolIV. Exhibits no 3'-5' exonuclease (proofreading) activity. May be involved in translesional synthesis, in conjunction with the beta clamp from PolIII. This is DNA polymerase IV from Gluconobacter oxydans (strain 621H) (Gluconobacter suboxydans).